The following is a 227-amino-acid chain: Type II restriction enzyme ScaI (227 aa).

The segment at 12 to 35 is disordered; that stretch reads EARVGTRTGGPAMRPKTSDSPYFG.

It carries out the reaction Endonucleolytic cleavage of DNA to give specific double-stranded fragments with terminal 5'-phosphates.. In terms of biological role, a P subtype restriction enzyme that recognizes the double-stranded sequence 5'-AGTACT-3' and cleaves after T-3. This Streptomyces caespitosus protein is Type II restriction enzyme ScaI.